The following is a 352-amino-acid chain: Phosphoribosylformylglycinamidine cyclo-ligase (352 aa).

It belongs to the AIR synthase family.

The protein resides in the cytoplasm. The enzyme catalyses 2-formamido-N(1)-(5-O-phospho-beta-D-ribosyl)acetamidine + ATP = 5-amino-1-(5-phospho-beta-D-ribosyl)imidazole + ADP + phosphate + H(+). It participates in purine metabolism; IMP biosynthesis via de novo pathway; 5-amino-1-(5-phospho-D-ribosyl)imidazole from N(2)-formyl-N(1)-(5-phospho-D-ribosyl)glycinamide: step 2/2. This is Phosphoribosylformylglycinamidine cyclo-ligase from Teredinibacter turnerae (strain ATCC 39867 / T7901).